The chain runs to 375 residues: Serpin B5 (375 aa).

Asn133, Asn298, and Asn361 each carry an N-linked (GlcNAc...) asparagine glycan.

This sequence belongs to the serpin family. Ov-serpin subfamily. In terms of assembly, interacts with IRF6.

Its subcellular location is the secreted. It is found in the extracellular space. Its function is as follows. Tumor suppressor. It blocks the growth, invasion, and metastatic properties of mammary tumors. As it does not undergo the S (stressed) to R (relaxed) conformational transition characteristic of active serpins, it exhibits no serine protease inhibitory activity. This is Serpin B5 (Serpinb5) from Mus musculus (Mouse).